We begin with the raw amino-acid sequence, 71 residues long: Ranatuerin-2P (71 aa).

The signal sequence occupies residues 1-20; it reads MFTMKKSLLLFFFLGTISLS. A propeptide spanning residues 21–44 is cleaved from the precursor; the sequence is LCEQERGADEDDGVEITEEEVKRG. A disulfide bond links cysteine 66 and cysteine 71.

As to expression, expressed by the skin glands.

It is found in the secreted. Antibacterial activity against Gram-positive bacterium S.aureus and Gram-negative bacterium E.coli. Has activity against C.albicans. This chain is Ranatuerin-2P, found in Lithobates pipiens (Northern leopard frog).